A 340-amino-acid polypeptide reads, in one-letter code: Beta-D-galactofuranosidase xynD (340 aa).

The signal sequence occupies residues 1–24; that stretch reads MKHHNYYPSTCLSILPFLLPLTMS. Residue D51 is the Proton acceptor of the active site. Residues N96 and N165 are each glycosylated (N-linked (GlcNAc...) asparagine). Residue E222 is the Proton donor of the active site. N-linked (GlcNAc...) asparagine glycosylation is found at N302 and N328.

The protein belongs to the glycosyl hydrolase 43 family.

It localises to the secreted. Its pathway is glycan degradation. Glycoside hydrolase family 43 beta-D-galactofuranosidase involved in the degradation of beta-galactofuranoside (Galf)-containing glycans such as galactomannan or O-glycans. Is not active on beta-1,5- or beta-1,6-linked beta-D-galactofuranose (Galf) residues. The sequence is that of Beta-D-galactofuranosidase xynD from Aspergillus niger (strain ATCC MYA-4892 / CBS 513.88 / FGSC A1513).